A 520-amino-acid chain; its full sequence is MAALRLLAWAFSRRVSAHRPQPTLPHHLIRHYPTTRCGKVKFYTDPVKAVEGIKDGASVMLGGFGLCGIPENLIGALKTKGVKDLKIISSNVGVDDFGLGILLASKQVRRVVCSYLGENKLCEQLYLAGKLELEMTPQGTLAERIRAGGTGVPAFYTPTGYGTQVQEGGVPIRYSPEGHLITLSQPREVREFEGQHHLLERAIRADFALIKGWKADRSGNVIFRGSARNFNVPMCKAADISVVEVEEIVDVGTFAPEDIHIPNIYVKRVIKGPRFEKRIERLTTRDSPPAPGSKDQDPKRTRIIKRAALEFKDGMYANLGIGIPVLASNYISPKMTVYLHSENGILGLGPFPLKKEVDPDIINAGKQTVTVIPGGCFFASDDSFAMIRGGHIQLTMLGAMQVSKYGDLANWMVPGKKVKGMGGAMDLVSSKKTKVVVTMEHCTKTKQPKILEKCTMPLTGKSCVDLIITEKAVFEVDRSKGLKLVELWEGSSLDEVKATTGCSFKVCPNLKPMQQIKSDA.

The N-terminal 39 residues, 1–39, are a transit peptide targeting the mitochondrion; the sequence is MAALRLLAWAFSRRVSAHRPQPTLPHHLIRHYPTTRCGK. The interval 280-299 is disordered; sequence ERLTTRDSPPAPGSKDQDPK. E342 serves as the catalytic 5-glutamyl coenzyme A thioester intermediate.

It belongs to the 3-oxoacid CoA-transferase family. Homodimer. Expressed in flagella of epididymal sperm.

It is found in the mitochondrion. It catalyses the reaction a 3-oxo acid + succinyl-CoA = a 3-oxoacyl-CoA + succinate. Its pathway is ketone metabolism; succinyl-CoA degradation; acetoacetyl-CoA from succinyl-CoA: step 1/1. Functionally, key enzyme for ketone body catabolism. Transfers the CoA moiety from succinate to acetoacetate. Formation of the enzyme-CoA intermediate proceeds via an unstable anhydride species formed between the carboxylate groups of the enzyme and substrate. Probably play and important roles in the energy metabolism of spermatozoa. The chain is Succinyl-CoA:3-ketoacid coenzyme A transferase 2A, mitochondrial (Oxct2a) from Rattus norvegicus (Rat).